The sequence spans 249 residues: uncharacterized protein (249 aa).

The first 25 residues, Met-1 to Gly-25, serve as a signal peptide directing secretion.

It belongs to the periplasmic pilus chaperone family.

The protein resides in the periplasm. Could be required for the biogenesis of a putative fimbria. This is an uncharacterized protein from Escherichia coli (strain K12).